The primary structure comprises 197 residues: NADH-quinone oxidoreductase subunit I 2 (197 aa).

4Fe-4S ferredoxin-type domains follow at residues 42–71 (GVIG…IDSH) and 91–120 (DRFA…WSPE). Cys51, Cys54, Cys57, Cys61, Cys100, Cys103, Cys106, and Cys110 together coordinate [4Fe-4S] cluster. The segment at 147–197 (APPALDPGAEEPKELAAARKAADKLAAQQQPDQPGPDHPGQPDESGQEGRT) is disordered. Residues 156–169 (EEPKELAAARKAAD) show a composition bias toward basic and acidic residues.

It belongs to the complex I 23 kDa subunit family. As to quaternary structure, NDH-1 is composed of 14 different subunits. Subunits NuoA, H, J, K, L, M, N constitute the membrane sector of the complex. Requires [4Fe-4S] cluster as cofactor.

Its subcellular location is the cell membrane. It catalyses the reaction a quinone + NADH + 5 H(+)(in) = a quinol + NAD(+) + 4 H(+)(out). Functionally, NDH-1 shuttles electrons from NADH, via FMN and iron-sulfur (Fe-S) centers, to quinones in the respiratory chain. The immediate electron acceptor for the enzyme in this species is believed to be ubiquinone. Couples the redox reaction to proton translocation (for every two electrons transferred, four hydrogen ions are translocated across the cytoplasmic membrane), and thus conserves the redox energy in a proton gradient. This chain is NADH-quinone oxidoreductase subunit I 2, found in Streptomyces coelicolor (strain ATCC BAA-471 / A3(2) / M145).